A 315-amino-acid polypeptide reads, in one-letter code: p-hydroxyphenylacetate 3-hydroxylase, reductase component (315 aa).

The protein belongs to the non-flavoprotein flavin reductase family. Homodimer. The p-hydroxyphenylacetate 3-hydroxylase (HpaH) is composed of an oxygenase component C2 and a reductase component C1.

The catalysed reaction is a reduced flavin + NAD(+) = an oxidized flavin + NADH + 2 H(+). Its pathway is aromatic compound metabolism; 4-hydroxyphenylacetate degradation; pyruvate and succinate semialdehyde from 4-hydroxyphenylacetate: step 1/7. Its activity is regulated as follows. Flavin concentrations greater than 15 uM do not inhibit the NADH oxidation activity of the reductase component C1 but do affect the hydroxylation activity of the C1-C2 complex. Maximal reductase activity is achieved only upon HPA binding to the reductase component C1 before interaction with NADH. HPA stimulates the rates of both the reduction of FMN and release of reduced FMN from the reductase component. In terms of biological role, reductase component of a two-component system that supplies reduced FMN (FMNH2) to the oxygenase component to catalyze the hydroxylation of 4-hydroxyphenylacetic acid, leading to the production of 3,4-dihydroxyphenylacetate (3,4-DHPA). Catalyzes the reduction of free flavins (FMN, FAD and riboflavin) by NADH. Subsequently, the reduced flavins diffuse to the oxygenase component C2. This is p-hydroxyphenylacetate 3-hydroxylase, reductase component from Acinetobacter baumannii.